The chain runs to 359 residues: Fructose-bisphosphate aldolase class 2 (359 aa).

S50 is a binding site for D-glyceraldehyde 3-phosphate. Catalysis depends on D83, which acts as the Proton donor. The Zn(2+) site is built by H84, D105, E142, and H198. G199 contacts dihydroxyacetone phosphate. H232 serves as a coordination point for Zn(2+). Residues G233–S235 and N275–T278 contribute to the dihydroxyacetone phosphate site.

It belongs to the class II fructose-bisphosphate aldolase family. Zn(2+) serves as cofactor.

It catalyses the reaction beta-D-fructose 1,6-bisphosphate = D-glyceraldehyde 3-phosphate + dihydroxyacetone phosphate. The protein operates within carbohydrate degradation; glycolysis; D-glyceraldehyde 3-phosphate and glycerone phosphate from D-glucose: step 4/4. Its function is as follows. Catalyzes the aldol condensation of dihydroxyacetone phosphate (DHAP or glycerone-phosphate) with glyceraldehyde 3-phosphate (G3P) to form fructose 1,6-bisphosphate (FBP) in gluconeogenesis and the reverse reaction in glycolysis. This is Fructose-bisphosphate aldolase class 2 (fbaA) from Synechocystis sp. (strain ATCC 27184 / PCC 6803 / Kazusa).